Reading from the N-terminus, the 621-residue chain is UvrABC system protein C (621 aa).

In terms of domain architecture, GIY-YIG spans 20–98; the sequence is TAPGVYRMYA…IKSLTPRYNV (79 aa). In terms of domain architecture, UVR spans 207 to 242; that stretch reads DLLAEELIQAMQVASEHLEFEQAARLRDLLTSLRSM.

Belongs to the UvrC family. In terms of assembly, interacts with UvrB in an incision complex.

It is found in the cytoplasm. Its function is as follows. The UvrABC repair system catalyzes the recognition and processing of DNA lesions. UvrC both incises the 5' and 3' sides of the lesion. The N-terminal half is responsible for the 3' incision and the C-terminal half is responsible for the 5' incision. The sequence is that of UvrABC system protein C from Xylella fastidiosa (strain Temecula1 / ATCC 700964).